The following is a 291-amino-acid chain: Undecaprenyl-diphosphatase (291 aa).

A run of 8 helical transmembrane segments spans residues 1–21 (MFII…LTEF), 48–68 (SAFT…AWVF), 102–122 (LHVL…DDFI), 126–146 (LFSV…MIIA), 162–182 (ISYF…WPGF), 203–223 (SDFT…LSLL), 231–251 (IADI…GLIA), and 267–287 (FAIY…GFGI).

It belongs to the UppP family.

The protein localises to the cell membrane. The catalysed reaction is di-trans,octa-cis-undecaprenyl diphosphate + H2O = di-trans,octa-cis-undecaprenyl phosphate + phosphate + H(+). Catalyzes the dephosphorylation of undecaprenyl diphosphate (UPP). Confers resistance to bacitracin. This chain is Undecaprenyl-diphosphatase, found in Staphylococcus aureus (strain COL).